We begin with the raw amino-acid sequence, 319 residues long: Ferrochelatase (319 aa).

Positions 194 and 275 each coordinate Fe cation.

Belongs to the ferrochelatase family.

It localises to the cytoplasm. The catalysed reaction is heme b + 2 H(+) = protoporphyrin IX + Fe(2+). It functions in the pathway porphyrin-containing compound metabolism; protoheme biosynthesis; protoheme from protoporphyrin-IX: step 1/1. Its function is as follows. Catalyzes the ferrous insertion into protoporphyrin IX. The chain is Ferrochelatase from Vibrio vulnificus (strain CMCP6).